The chain runs to 215 residues: CUE domain-containing protein 4, mitochondrial (215 aa).

Residues 1–29 (MQPEQLAGCAVVLTVTVLTLRWMFRVDKG) constitute a mitochondrion transit peptide. Residues 48–90 (VNSEHVHLVKTVFPHLESSAIAYDLQKTKNVDATIENALRGQP) enclose the CUE domain. The segment at 109–191 (GAGASSHSEE…KEREELFRKR (83 aa)) is disordered. 2 stretches are compositionally biased toward low complexity: residues 122-140 (SHEVTSNVSSGSSASSLAS) and 153-165 (SSRISSSDNSSSS). Over residues 180–191 (SKKEREELFRKR) the composition is skewed to basic and acidic residues.

It is found in the mitochondrion. The sequence is that of CUE domain-containing protein 4, mitochondrial from Schizosaccharomyces pombe (strain 972 / ATCC 24843) (Fission yeast).